The primary structure comprises 2344 residues: Genome polyprotein (2344 aa).

The 162-residue stretch at Q492–S653 folds into the SF3 helicase domain. G522–T529 is an ATP binding site. Position 1014 is an O-(5'-phospho-RNA)-tyrosine (Y1014). Residue Y1014 is modified to O-UMP-tyrosine; transient. The Peptidase C24 domain maps to G1109–T1244. Catalysis depends on for 3CLpro activity residues H1135, D1152, and C1212. Positions S1495–L1619 constitute a RdRp catalytic domain. A disulfide bridge connects residues C1584 and C1591. Residues R1771–G1794 are disordered. The span at A1778–G1794 shows a compositional bias: low complexity.

As to quaternary structure, homodimer. Homomultimer. Interacts with host type II histo-blood group structures antigens at the surface of target cells. Requires Mn(2+) as cofactor. In terms of processing, specific enzymatic cleavages by its own cysteine protease yield mature proteins. The protease cleaves itself from the nascent polyprotein autocatalytically. Precursor p41 can be cleaved by viral 3CLpro into protein p19 and VPg, or cleaved by host protease into protein p23/2 and protein p18. VPg is uridylylated by the polymerase and is covalently attached to the 5'-end of the polyadenylated genomic and subgenomic RNAs. This uridylylated form acts as a nucleotide-peptide primer for the polymerase.

The protein resides in the host cytoplasm. The protein localises to the host endoplasmic reticulum. It localises to the virion. The catalysed reaction is a ribonucleoside 5'-triphosphate + H2O = a ribonucleoside 5'-diphosphate + phosphate + H(+). It catalyses the reaction Endopeptidase with a preference for cleavage when the P1 position is occupied by Glu-|-Xaa and the P1' position is occupied by Gly-|-Yaa.. The enzyme catalyses RNA(n) + a ribonucleoside 5'-triphosphate = RNA(n+1) + diphosphate. Its function is as follows. Together with NTPase and NS4, initiates the formation of the replication complex. Induces the proliferation of the host smooth ER membranes forming long tubular structures. These remodeled membranes probably form the viral factories that contain the replication complex. In terms of biological role, displays NTPase activity, but no helicase activity. Induces the formation of convoluted membranes derived from the host ER. These remodeled membranes probably form the viral factories that contain the replication complex. Together with NS2 and NS4, initiates the formation of the replication complex. Probable key protein responsible for the formation of membrane alterations by the virus. Induces the formation of convoluted membranes derived from the host ER. These remodeled membranes probably form the viral factories that contain the replication complex. Together with NS2 and NTPase, initiates the formation of the replication complex. Functionally, viral genome-linked protein is covalently linked to the 5'-end of the positive-strand, negative-strand genomic RNAs and subgenomic RNA. Acts as a genome-linked replication primer. May recruit ribosome to viral RNA thereby promoting viral proteins translation. Interacts with host translation initiation complex to allow the translation of viral proteins. Its function is as follows. Processes the polyprotein. 3CLpro-RdRp is first released by autocleavage, then all other proteins are cleaved. May cleave polyadenylate-binding protein thereby inhibiting cellular translation. In terms of biological role, replicates genomic and antigenomic RNA by recognizing replications specific signals. Also transcribes a subgenomic mRNA by initiating RNA synthesis internally on antigenomic RNA. This sgRNA codes for structural proteins. Catalyzes the covalent attachment VPg with viral RNAs. Capsid protein VP60 self assembles to form an icosahedral capsid with a T=3 symmetry, about 35 nm in diameter, and consisting of 180 capsid proteins. A smaller form of capsid with a diameter of 23 nm might be capsid proteins assembled as icosahedron with T=1 symmetry. The capsid encapsulate VP2 proteins and genomic or subgenomic RNA. Attaches virion to target cells by binding histo-blood group antigens, inducing endocytosis of the viral particle. Acidification of the endosome induces conformational change of capsid protein thereby injecting virus genomic RNA into host cytoplasm. This is Genome polyprotein from Oryctolagus cuniculus (Rabbit).